Here is a 493-residue protein sequence, read N- to C-terminus: MTELNKLTVADSIKGLKNKDFTSTELIGAHIKQIEKHRNLNAYVTDTFDLALKQAEAADQKYAQNNARTLEGIPFAAKDLFCTKGIRTTACSNILKNFIPNYESSVTQNIFDKGGVMLGKTNMDEFAMGSANITSCFGNVISPWKANDDNADLVPGGSSGGSAAAVSGFMASAALGSDTGGSVRQPASFTGLVGFKPTYGRCSRYGMISFASSLDQAGIFTRSVLDSSIMLEAMMGFDEKDSTSIKAEVPELQSAIGSSMKNMKIGVPLSLGEGSIIEPDIMKMWQDTIELLKNAGAEIVDITLPHAKYGVAVYYVIAPAEASSNLSRYDGVRYGLRVERENMTLDEMYEMTRSTGFGEEVKRRIMIGTYVLSSSGMDAYYLKAQKVRRLVANDFNNAFAKVDAILLPAAPTAAFKIGEKQNDPTIMYLNDLFTIPASLAGLPCASVPAGLSARGLPLGIQIIGKQLDEYNVLKVASTIESGVKHIKFEPKGF.

Residues Lys-78 and Ser-158 each act as charge relay system in the active site. Catalysis depends on Ser-182, which acts as the Acyl-ester intermediate.

It belongs to the amidase family. GatA subfamily. In terms of assembly, heterotrimer of A, B and C subunits.

It carries out the reaction L-glutamyl-tRNA(Gln) + L-glutamine + ATP + H2O = L-glutaminyl-tRNA(Gln) + L-glutamate + ADP + phosphate + H(+). Its function is as follows. Allows the formation of correctly charged Gln-tRNA(Gln) through the transamidation of misacylated Glu-tRNA(Gln) in organisms which lack glutaminyl-tRNA synthetase. The reaction takes place in the presence of glutamine and ATP through an activated gamma-phospho-Glu-tRNA(Gln). The sequence is that of Glutamyl-tRNA(Gln) amidotransferase subunit A from Rickettsia conorii (strain ATCC VR-613 / Malish 7).